We begin with the raw amino-acid sequence, 397 residues long: MMMMSGRPSGGAGGGRYPFTASQWQELEHQALIYKYMASGTPIPSDLILPLRRSFLLDSALATSPSLAFPPQPSLGWGCFGMGFGRKAEDPEPGRCRRTDGKKWRCSKEAYPDSKYCEKHMHRGKNRSRKPVEMSLATPPPPSSSATSAASNTSAGVAPTTTTTSSPAPSYSRPAPHDAAPYQALYGGPYAAATARTPAAAAYHAQVSPFHLQLDTTHPHPPPSYYSMDHKEYAYGHATKEVHGEHAFFSDGTEREHHHAAAGHGQWQFKQLGMEPKQSTTPLFPGAGYGHTAASPYAIDLSKEDDDEKERRQQQQQQQQQHCFLLGADLRLEKPAGHDHAAAAQKPLRHFFDEWPHEKNSKGSWMGLEGETQLSMSIPMAANDLPITTTSRYHNDD.

The 36-residue stretch at 18 to 53 (PFTASQWQELEHQALIYKYMASGTPIPSDLILPLRR) folds into the QLQ domain. Short sequence motifs (bipartite nuclear localization signal) lie at residues 86–105 (RKAEDPEPGRCRRTDGKKWR) and 123–130 (RGKNRSRK). A WRC domain is found at 90-134 (DPEPGRCRRTDGKKWRCSKEAYPDSKYCEKHMHRGKNRSRKPVEM). The segment at 117–176 (CEKHMHRGKNRSRKPVEMSLATPPPPSSSATSAASNTSAGVAPTTTTTSSPAPSYSRPAP) is disordered. A compositionally biased stretch (basic residues) spans 120–129 (HMHRGKNRSR). Positions 144 to 174 (SSATSAASNTSAGVAPTTTTTSSPAPSYSRP) are enriched in low complexity.

It belongs to the GRF family.

It localises to the nucleus. Transcription activator that plays a regulatory role in gibberellin-induced stem elongation. This is Growth-regulating factor 1 (GRF1) from Oryza sativa subsp. japonica (Rice).